The chain runs to 277 residues: Phosphonoacetaldehyde hydrolase (277 aa).

The active-site Nucleophile is the Asp20. Residues Asp20 and Ala22 each contribute to the Mg(2+) site. The active-site Schiff-base intermediate with substrate is the Lys61. Residue Asp194 coordinates Mg(2+).

This sequence belongs to the HAD-like hydrolase superfamily. PhnX family. In terms of assembly, homodimer. Requires Mg(2+) as cofactor.

The catalysed reaction is phosphonoacetaldehyde + H2O = acetaldehyde + phosphate + H(+). In terms of biological role, involved in phosphonate degradation. This chain is Phosphonoacetaldehyde hydrolase, found in Syntrophobacter fumaroxidans (strain DSM 10017 / MPOB).